We begin with the raw amino-acid sequence, 467 residues long: MKIRTRYAPSPTGFLHIGGARTALFNYLFAKHHNGDFILRIEDSDNSRNIKDGEKSQIENLLWLGIIPDEKPGSETKFGPYRQSEKLERYQKLAQELIKKGFAYYAFDNQEELELQKKEQIAKGIFSFRYDQNWLKISDQEKQKRLKNKHFVIRFKVDKAKNFCWNDLVRGQICFEGSAISDWVIIKSDGFPTYNFAVVVDDFDMEISHIFRGEEHISNTPKQIGIYQAFNWKTPKFGHLTIITDKNGKKLSKRDKNLFQFIEDYKNQGYHSEAFFNFLALLGWTSPDSQEFFDHKSLIKAFDYKRLSKAPSYFDIEKLNWFSKSYISKMTVDKILENLELSDNQIWNRFFVETFQKSSIKYADFYKNFEFFHRPKQEMDEKMLEIFEKLDKKPVKIFASRIDYQNWDYTKINDLIKEIGQKLEITGKNLLLPIRLATTFTNSGPELARAIWLLGKKIIEKRLLKWK.

The short motif at 9-19 (PSPTGFLHIGG) is the 'HIGH' region element. The 'KMSKS' region motif lies at 250-254 (KLSKR). Lys-253 serves as a coordination point for ATP.

It belongs to the class-I aminoacyl-tRNA synthetase family. Glutamate--tRNA ligase type 1 subfamily. As to quaternary structure, monomer.

It localises to the cytoplasm. It carries out the reaction tRNA(Glu) + L-glutamate + ATP = L-glutamyl-tRNA(Glu) + AMP + diphosphate. In terms of biological role, catalyzes the attachment of glutamate to tRNA(Glu) in a two-step reaction: glutamate is first activated by ATP to form Glu-AMP and then transferred to the acceptor end of tRNA(Glu). The chain is Glutamate--tRNA ligase from Mesomycoplasma hyopneumoniae (strain 7448) (Mycoplasma hyopneumoniae).